Reading from the N-terminus, the 23-residue chain is Acidic phospholipase A2 CTs-A2 (23 aa).

Ca(2+) serves as cofactor. Post-translationally, contains 7 disulfide bonds. As to expression, expressed by the venom gland.

Its subcellular location is the secreted. The enzyme catalyses a 1,2-diacyl-sn-glycero-3-phosphocholine + H2O = a 1-acyl-sn-glycero-3-phosphocholine + a fatty acid + H(+). In terms of biological role, snake venom phospholipase A2 (PLA2) that shows a moderate inhibition of ADP-induced human platelet aggregation when tested on platelet rich plasma. Exhibits moderate hydrolytic activities and prefers the anionic micelles (dPPC with deoxycholate) to the zwitterionic micelles (dPPC with Triton X-100). PLA2 catalyzes the calcium-dependent hydrolysis of the 2-acyl groups in 3-sn-phosphoglycerides. The protein is Acidic phospholipase A2 CTs-A2 of Trimeresurus stejnegeri (Chinese green tree viper).